The following is a 184-amino-acid chain: Signal peptidase complex catalytic subunit SEC11 (184 aa).

At 1-28 (MDFIKEQYNSLVLDLRKTFRNKRDGLSH) the chain is on the cytoplasmic side. The helical; Signal-anchor for type II membrane protein transmembrane segment at 29–49 (ILNVICLLLNALMIWKLLVVF) threads the bilayer. At 50-184 (TGCESPVVVV…MLIMILMGYE (135 aa)) the chain is on the lumenal side. Residues Ser-63, His-101, and Asp-127 each act as charge relay system in the active site. The interval 170-181 (AIVSIMLIMILM) is C-terminal short (CTS) helix.

The protein belongs to the peptidase S26B family. In terms of assembly, component of the signal peptidase complex (SPC) composed of a catalytic subunit SEC11/SPC21 and three accessory subunits SPC25, SPC3/SPC22, SPC1/SPC12. Within the complex, interacts with SPC25. The complex induces a local thinning of the ER membrane which is used to measure the length of the signal peptide (SP) h-region of protein substrates. This ensures the selectivity of the complex towards h-regions shorter than 18-20 amino acids. The complex interacts with the SEC61 channel-forming translocon complex and is involved in the import of classical signal sequence-containing proteins. Phosphorylated. Phosphorylation increases catalytic activity.

The protein localises to the endoplasmic reticulum membrane. The enzyme catalyses Cleavage of hydrophobic, N-terminal signal or leader sequences from secreted and periplasmic proteins.. With respect to regulation, phosphorylation increases catalytic activity. Ca(2+) slightly increases catalytic activity in vitro. Catalytic component of the signal peptidase complex (SPC) which catalyzes the cleavage of N-terminal signal sequences from nascent proteins as they are translocated into the lumen of the endoplasmic reticulum. Specifically cleaves N-terminal signal peptides that contain a hydrophobic alpha-helix (h-region) shorter than 18-20 amino acids. The polypeptide is Signal peptidase complex catalytic subunit SEC11 (Plasmodium falciparum (isolate 3D7)).